Here is a 573-residue protein sequence, read N- to C-terminus: MARILITSALPYINGIKHLGNLVGSQLPADLYARYNRGRGHEVMFLCATDEHGTPAELAAAKAGKPVADYCAEMHAVQADIAKRFGLSFDHYGRSSSPQNHALTQHFAGKLEEAGLITEVSEKQVYSNADGRFLPDRYIEGTCPNCGFEKARGDQCEECTKQLDPTDLINPRSAISGSTDLEVRETKHLFLRQSAMRDQLDQWIDSKTDWPVLTTSIAKKWLHDGDGLQDRGITRDLDWGIAVKKGDADWPGMEGKVFYVWFDAPIEYIAAAGEWAEAHGKTDADWERWWRTDKGADDVKYVQFMGKDNVPFHTLSFPATLLGSGEPWKMVDHLKSFNYLNYDGGQFSTSQGRGVFMDQALEILPADYWRWWLLSHAPESSDSEFTWENFQQSVNKDLADVLGNFVSRITKFCRSKFGEEVPDGGTWGEQEQTLIEELSTRIGAFERHMEAMEVRKSAQELRAIWVAGNEYLQSAAPWSVFKEDPERAAGQVRLGLNLIRLYAVLSAPFIPDASDRLFAALGTEDRSWPEDVAAALAALPAGHAFTVPEVLFAKITDEQREEWQERFAGGRSA.

The 'HIGH' region signature appears at 11-21 (PYINGIKHLGN). Positions 143, 146, 156, and 159 each coordinate Zn(2+). Positions 346–350 (QFSTS) match the 'KMSKS' region motif. Residue T349 coordinates ATP.

The protein belongs to the class-I aminoacyl-tRNA synthetase family. MetG type 1 subfamily. As to quaternary structure, monomer. Requires Zn(2+) as cofactor.

The protein localises to the cytoplasm. It carries out the reaction tRNA(Met) + L-methionine + ATP = L-methionyl-tRNA(Met) + AMP + diphosphate. Its function is as follows. Is required not only for elongation of protein synthesis but also for the initiation of all mRNA translation through initiator tRNA(fMet) aminoacylation. The chain is Methionine--tRNA ligase from Ruegeria sp. (strain TM1040) (Silicibacter sp.).